A 456-amino-acid polypeptide reads, in one-letter code: G-protein coupled receptor 39 (456 aa).

The Extracellular portion of the chain corresponds to 1 to 34; that stretch reads MASSSGSNHICSRVIDHSHVPEFEVATWIKITLI. Intrachain disulfides connect Cys11–Cys191 and Cys108–Cys210. Positions 17 and 19 each coordinate Zn(2+). Residues 35–55 form a helical membrane-spanning segment; that stretch reads LVYLIIFVVGILGNSVTIRVT. The Cytoplasmic segment spans residues 56–69; sequence QVLQKKGYLQKEVT. The chain crosses the membrane as a helical span at residues 70 to 89; the sequence is DHMVSLACSDILVFLIGMPM. At 90 to 109 the chain is on the extracellular side; sequence EFYSIIWNPLTTPSYALSCK. The chain crosses the membrane as a helical span at residues 110-131; the sequence is LHTFLFETCSYATLLHVLTLSF. Residues 132-151 are Cytoplasmic-facing; sequence ERYIAICHPFKYKAVSGPRQ. Residues 152–172 traverse the membrane as a helical segment; that stretch reads VKLLIGFVWVTSALVALPLLF. Residues 173–217 are Extracellular-facing; sequence AMGIEYPLVNVPTHKGLNCNLSRTRHHDEPGNSNMSICTNLSNRW. N-linked (GlcNAc...) asparagine glycans are attached at residues Asn192 and Asn206. Residues 218-242 traverse the membrane as a helical segment; it reads EVFQSSIFGAFAVYLVVLASVAFMC. Over 243 to 283 the chain is Cytoplasmic; that stretch reads WNMMKVLMKSKQGTLAGTGPQLQLRKSESEESRTARRQTII. Residues 284-305 form a helical membrane-spanning segment; it reads FLRLIVVTLAVCWMPNQIRRIM. Residues 306–323 lie on the Extracellular side of the membrane; sequence AAAKPKHDWTRTYFRAYM. Residues 324 to 344 traverse the membrane as a helical segment; that stretch reads ILLPFSDTFFYLSSVVNPLLY. At 345 to 456 the chain is on the cytoplasmic side; that stretch reads NVSSQQFRKV…TENSLQEQEV (112 aa). Phosphoserine is present on Ser397. The segment at 415–456 is disordered; the sequence is FQTEAKPGEAKPQPLSPESPQTGSETKPAGSTTENSLQEQEV. The span at 430 to 456 shows a compositional bias: polar residues; it reads SPESPQTGSETKPAGSTTENSLQEQEV.

The protein belongs to the G-protein coupled receptor 1 family. As to quaternary structure, interacts with HTR1A. Interacts with GALR1. In terms of tissue distribution, expression is detected in septumamygdala, parietal cells, enterocytes, neurons and pancreas, in peripheral organs such as the duodenum and kidney but not in the pituitary and hypothalamus.

It localises to the cell membrane. Functionally, zinc-sensing receptor that can sense changes in extracellular Zn(2+), mediate Zn(2+) signal transmission, and participates in the regulation of numerous physiological processes including glucose homeostasis regulation, gastrointestinal mobility, hormone secretion and cell death. Activation by Zn(2+) in keratinocytes increases the intracellular concentration of Ca(2+) and activates the ERK/MAPK and PI3K/AKT signaling pathways leading to epithelial repair. Plays an essential role in normal wound healing by inducing the production of cytokines including the major inflammatory cytokine IL6 via the PKC/MAPK/CEBPB pathway. Regulates adipose tissue metabolism, especially lipolysis, and regulates the function of lipases, such as hormone-sensitive lipase and adipose triglyceride lipase. Plays a role in the inhibition of cell death and protects against oxidative, endoplasmic reticulum and mitochondrial stress by inducing secretion of the cytoprotective pigment epithelium-derived growth factor (PEDF) and probably other protective transcripts in a GNA13/RHOA/SRE-dependent manner. Forms dynamic heteroreceptor complexes with HTR1A and GALR1 depending on cell type or specific physiological states, resulting in signaling diversity: HTR1A-GPR39 shows additive increase in signaling along the serum response element (SRE) and NF-kappa-B pathways while GALR1 acts as an antagonist blocking SRE. The chain is G-protein coupled receptor 39 (Gpr39) from Mus musculus (Mouse).